We begin with the raw amino-acid sequence, 394 residues long: Phosphoglycerate kinase (394 aa).

Substrate-binding positions include 21 to 23 (DFN), R36, 59 to 62 (HLGR), R118, and R151. Residue S183 is modified to Phosphoserine. Residues K201 and G292 each contribute to the ATP site. T299 bears the Phosphothreonine mark. ATP is bound by residues E323 and 350–353 (GGDS).

It belongs to the phosphoglycerate kinase family. Monomer.

It is found in the cytoplasm. It carries out the reaction (2R)-3-phosphoglycerate + ATP = (2R)-3-phospho-glyceroyl phosphate + ADP. It functions in the pathway carbohydrate degradation; glycolysis; pyruvate from D-glyceraldehyde 3-phosphate: step 2/5. This chain is Phosphoglycerate kinase, found in Bacillus thuringiensis (strain Al Hakam).